Consider the following 611-residue polypeptide: Serine protease FAM111A (611 aa).

Positions 16-28 (KCNMKIEHYFSPV) match the PIP-box motif. A Glycyl lysine isopeptide (Lys-Gly) (interchain with G-Cter in SUMO2) cross-link involves residue Lys20. At Ser26 the chain carries Phosphoserine. Glycyl lysine isopeptide (Lys-Gly) (interchain with G-Cter in SUMO2) cross-links involve residues Lys30 and Lys65. The segment at 44–73 (ESRGDPRATTNTQAQRFHSPKKNPEDQTMP) is disordered. Positions 336-611 (KVTKNSSSIK…DVEMMSDEDL (276 aa)) are interaction with SV40 large T antigen. Active-site charge relay system residues include His385, Asp439, and Ser541.

It belongs to the FAM111 family. Interacts (via PIP-box) with PCNA; then interaction is direct. In terms of assembly, (Microbial infection) Interacts with SV40 virus large T antigen and this interaction is required for efficient viral replication and sustained viral gene expression in restrictive cell types. As to quaternary structure, (Microbial infection) Interacts with vaccinia virus protein OPG079; this interaction promotes the degradation of OPG079. Post-translationally, autocatalytically cleaved; activating the protein. Autocatalytic cleavage takes place in trans.

The protein localises to the nucleus. It is found in the chromosome. It localises to the cytoplasm. In terms of biological role, single-stranded DNA-binding serine protease that mediates the proteolytic cleavage of covalent DNA-protein cross-links (DPCs) during DNA synthesis, thereby playing a key role in maintaining genomic integrity. DPCs are highly toxic DNA lesions that interfere with essential chromatin transactions, such as replication and transcription, and which are induced by reactive agents, such as UV light or formaldehyde. Protects replication fork from stalling by removing DPCs, such as covalently trapped topoisomerase 1 (TOP1) adducts on DNA lesion, or poly(ADP-ribose) polymerase 1 (PARP1)-DNA complexes trapped by PARP inhibitors. Required for PCNA loading on replication sites. Promotes S-phase entry and DNA synthesis. Also acts as a restriction factor for some viruses including SV40 polyomavirus and vaccinia virus. Mechanistically, affects nuclear barrier function during viral replication by mediating the disruption of the nuclear pore complex (NPC) via its protease activity. In turn, interacts with vaccinia virus DNA-binding protein OPG079 in the cytoplasm and promotes its degradation without the need of its protease activity but through autophagy. This is Serine protease FAM111A from Homo sapiens (Human).